The following is a 233-amino-acid chain: Fibrillarin-like rRNA/tRNA 2'-O-methyltransferase (233 aa).

Residues 90-91, 109-110, 134-135, and 154-157 contribute to the S-adenosyl-L-methionine site; these read TT, EF, DA, and DVAQ.

This sequence belongs to the methyltransferase superfamily. Fibrillarin family. In terms of assembly, interacts with nop5. Component of box C/D small ribonucleoprotein (sRNP) particles that contain rpl7ae, FlpA and nop5, plus a guide RNA.

In terms of biological role, involved in pre-rRNA and tRNA processing. Utilizes the methyl donor S-adenosyl-L-methionine to catalyze the site-specific 2'-hydroxyl methylation of ribose moieties in rRNA and tRNA. Site specificity is provided by a guide RNA that base pairs with the substrate. Methylation occurs at a characteristic distance from the sequence involved in base pairing with the guide RNA. This is Fibrillarin-like rRNA/tRNA 2'-O-methyltransferase from Aeropyrum pernix (strain ATCC 700893 / DSM 11879 / JCM 9820 / NBRC 100138 / K1).